The sequence spans 421 residues: UDP-N-acetylglucosamine 1-carboxyvinyltransferase 2 (421 aa).

Residue Lys22–Asn23 participates in phosphoenolpyruvate binding. Residue Arg95 coordinates UDP-N-acetyl-alpha-D-glucosamine. Cys119 functions as the Proton donor in the catalytic mechanism. The residue at position 119 (Cys119) is a 2-(S-cysteinyl)pyruvic acid O-phosphothioketal. UDP-N-acetyl-alpha-D-glucosamine is bound by residues Arg124–Gln128, Asp308, and Val330.

It belongs to the EPSP synthase family. MurA subfamily.

The protein localises to the cytoplasm. The enzyme catalyses phosphoenolpyruvate + UDP-N-acetyl-alpha-D-glucosamine = UDP-N-acetyl-3-O-(1-carboxyvinyl)-alpha-D-glucosamine + phosphate. Its pathway is cell wall biogenesis; peptidoglycan biosynthesis. Cell wall formation. Adds enolpyruvyl to UDP-N-acetylglucosamine. This is UDP-N-acetylglucosamine 1-carboxyvinyltransferase 2 from Staphylococcus saprophyticus subsp. saprophyticus (strain ATCC 15305 / DSM 20229 / NCIMB 8711 / NCTC 7292 / S-41).